Here is a 236-residue protein sequence, read N- to C-terminus: EEF1A lysine methyltransferase 2 (236 aa).

The span at Met-1 to Ala-11 shows a compositional bias: gly residues. The disordered stretch occupies residues Met-1 to Ala-31. Position 2 is an N-acetylserine (Ser-2). Ser-21 carries the phosphoserine modification.

The protein belongs to the class I-like SAM-binding methyltransferase superfamily. EFM4 family.

It is found in the cytoplasm. It localises to the nucleus. It carries out the reaction L-lysyl-[protein] + 3 S-adenosyl-L-methionine = N(6),N(6),N(6)-trimethyl-L-lysyl-[protein] + 3 S-adenosyl-L-homocysteine + 3 H(+). Its function is as follows. Protein-lysine methyltransferase that selectively catalyzes the trimethylation of EEF1A at 'Lys-318'. This chain is EEF1A lysine methyltransferase 2, found in Homo sapiens (Human).